The primary structure comprises 361 residues: 5-formaminoimidazole-4-carboxamide-1-(beta)-D-ribofuranosyl 5'-monophosphate synthetase (361 aa).

5-amino-1-(5-phospho-beta-D-ribosyl)imidazole-4-carboxamide contacts are provided by H27 and S94. The region spanning 116 to 348 (RAILRWEAER…MGQRIAKEIK (233 aa)) is the ATP-grasp domain. ATP is bound by residues 146–208 (PDEI…ANYC) and E230. Residue N258 coordinates 5-amino-1-(5-phospho-beta-D-ribosyl)imidazole-4-carboxamide. Residues Q297 and E310 each contribute to the Mg(2+) site.

It belongs to the phosphohexose mutase family. Mg(2+) serves as cofactor. It depends on Mn(2+) as a cofactor.

It carries out the reaction 5-amino-1-(5-phospho-beta-D-ribosyl)imidazole-4-carboxamide + formate + ATP = 5-formamido-1-(5-phospho-D-ribosyl)imidazole-4-carboxamide + ADP + phosphate. It participates in purine metabolism; IMP biosynthesis via de novo pathway; 5-formamido-1-(5-phospho-D-ribosyl)imidazole-4-carboxamide from 5-amino-1-(5-phospho-D-ribosyl)imidazole-4-carboxamide (formate route): step 1/1. Functionally, catalyzes the ATP- and formate-dependent formylation of 5-aminoimidazole-4-carboxamide-1-beta-d-ribofuranosyl 5'-monophosphate (AICAR) to 5-formaminoimidazole-4-carboxamide-1-beta-d-ribofuranosyl 5'-monophosphate (FAICAR) in the absence of folates. The sequence is that of 5-formaminoimidazole-4-carboxamide-1-(beta)-D-ribofuranosyl 5'-monophosphate synthetase from Methanococcus maripaludis (strain DSM 14266 / JCM 13030 / NBRC 101832 / S2 / LL).